Here is a 367-residue protein sequence, read N- to C-terminus: MKKVCALALSILTTIGATAADSAWAAQTSVHLYNWYDFIAPETPKAFQKETGTRVVLDTFDSAETAQGKLMVGRSGYDVVVITSNILPGLIKAGVLQELDRDRLPHWKNLDADILGKLQANDPGNRYAVPYLWGTTGIAYDVDKVRKLLGPDAPVDSWDLVFKEENISRLSQCGVATLDSSTELVSIALNYLGLPHNSQNPEDYQKAQELLLKVRPYIRYFDSSRVDTDLSNGNVCVVVGWQGTAYMAQVNNEQAGNGRHIAYSIPREGSLVWAENMVLLKDAPHPQQGYALIDYLLRPEVIARTSNYVGYPNGNQAALPLVERKLRENPAVYLSKETMATLFPLETLPLKVERIRTRVWSRVKTGS.

The first 19 residues, Met1 to Ala19, serve as a signal peptide directing secretion.

Belongs to the bacterial solute-binding protein 1 family.

The protein resides in the periplasm. Its function is as follows. Binds putrescine and agmatine. The chain is Putrescine/agmatine-binding protein from Pseudomonas aeruginosa (strain ATCC 15692 / DSM 22644 / CIP 104116 / JCM 14847 / LMG 12228 / 1C / PRS 101 / PAO1).